Reading from the N-terminus, the 446-residue chain is MREIVHLQTGQCGNQIGAAFWQTISGEHGLDSNGVYNGTSELQLERMSVYFNEASGNKYVPRAVLVDLEPGTMDAVRAGPFGQLFRPDNFVFGQSGAGNNWAKGHYTEGAELVDQVLDVVRREAEACDCLQGFQITHSLGGGTGAGMGTLLISKIREEFPDRMMATFSVVPSPKVSDTVVEPYNATLSVHQLVENSDETFCIDNEALYDICMRTLKLSNPSYGDLNHLVSAVMSGVTTCLRFPGQLNSDLRKLAVNMVPFPRLHFFMVGFAPLTSRGAHSFRAVTVPELTQQMFDPKNMMAASDFRNGRYLTCSAIFRGKVSMKEVEDQMRNVQNKNSSYFVEWIPNNVQTALCSIPPRGLKMSSTFVGNSTAIQELFKRIGEQFTAMFRRKAFLHWYTGEGMDEMEFTEAESNMNDLVSEYQQYQDAGVDEEEEEYEEEPLPEDE.

GTP-binding residues include Q11, E69, S138, G142, T143, G144, N204, and N226. Position 69 (E69) interacts with Mg(2+). Positions 423 to 446 (QQYQDAGVDEEEEEYEEEPLPEDE) are disordered. Acidic residues predominate over residues 429–446 (GVDEEEEEYEEEPLPEDE).

The protein belongs to the tubulin family. Dimer of alpha and beta chains. A typical microtubule is a hollow water-filled tube with an outer diameter of 25 nm and an inner diameter of 15 nM. Alpha-beta heterodimers associate head-to-tail to form protofilaments running lengthwise along the microtubule wall with the beta-tubulin subunit facing the microtubule plus end conferring a structural polarity. Microtubules usually have 13 protofilaments but different protofilament numbers can be found in some organisms and specialized cells. It depends on Mg(2+) as a cofactor.

The protein resides in the cytoplasm. It localises to the cytoskeleton. Its function is as follows. Tubulin is the major constituent of microtubules, a cylinder consisting of laterally associated linear protofilaments composed of alpha- and beta-tubulin heterodimers. Microtubules grow by the addition of GTP-tubulin dimers to the microtubule end, where a stabilizing cap forms. Below the cap, tubulin dimers are in GDP-bound state, owing to GTPase activity of alpha-tubulin. This is Tubulin beta chain (TUBB) from Pestalotiopsis microspora.